Consider the following 462-residue polypeptide: Solute carrier family 41 member 3 (462 aa).

The next 9 helical transmembrane spans lie at Cys-41 to Met-61, Leu-121 to Met-141, Val-163 to Gly-183, Ile-194 to Met-214, Trp-225 to Ile-245, Tyr-258 to Ser-278, Val-351 to Glu-371, Ile-380 to Ala-400, and Gly-424 to Leu-444.

It belongs to the SLC41A transporter family.

The protein localises to the mitochondrion inner membrane. It carries out the reaction Mg(2+)(in) + 2 Na(+)(out) = Mg(2+)(out) + 2 Na(+)(in). Na(+)/Mg(2+) ion exchanger that acts as a predominant Mg(2+) efflux system at the mitochondrial inner membrane. The polypeptide is Solute carrier family 41 member 3 (Slc41a3) (Rattus norvegicus (Rat)).